Here is a 582-residue protein sequence, read N- to C-terminus: Phosphoribosylaminoimidazole carboxylase (582 aa).

One can recognise an ATP-grasp domain in the interval 114–305 (KKYLAEKGVA…QFENHLRAIL (192 aa)). 143–200 (AGRLGLPLMLKAKTLAYDGRGNSPLKSTSSEDIQASLKFLGDRPLYAEGWAPFVKEVA) contributes to the ATP binding site.

This sequence in the C-terminal section; belongs to the AIR carboxylase family. Class I subfamily.

It catalyses the reaction 5-amino-1-(5-phospho-D-ribosyl)imidazole-4-carboxylate + H(+) = 5-amino-1-(5-phospho-beta-D-ribosyl)imidazole + CO2. The protein operates within purine metabolism; IMP biosynthesis via de novo pathway; 5-amino-1-(5-phospho-D-ribosyl)imidazole-4-carboxylate from 5-amino-1-(5-phospho-D-ribosyl)imidazole (carboxylase route): step 1/1. The chain is Phosphoribosylaminoimidazole carboxylase (ADE2) from Cryptococcus neoformans var. grubii serotype A (strain H99 / ATCC 208821 / CBS 10515 / FGSC 9487) (Filobasidiella neoformans var. grubii).